We begin with the raw amino-acid sequence, 173 residues long: Nucleoside-triphosphatase THEP1 (173 aa).

ATP contacts are provided by residues 9-16 and 97-104; these read GPPGVGKT and LYVIDEVG.

Belongs to the THEP1 NTPase family.

The catalysed reaction is a ribonucleoside 5'-triphosphate + H2O = a ribonucleoside 5'-diphosphate + phosphate + H(+). In terms of biological role, has nucleotide phosphatase activity towards ATP, GTP, CTP, TTP and UTP. May hydrolyze nucleoside diphosphates with lower efficiency. This Caldivirga maquilingensis (strain ATCC 700844 / DSM 13496 / JCM 10307 / IC-167) protein is Nucleoside-triphosphatase THEP1.